The chain runs to 348 residues: Dihydroorotase (348 aa).

Zn(2+) contacts are provided by His-17 and His-19. Residues 19-21 and Asn-45 contribute to the substrate site; that span reads HLR. Zn(2+)-binding residues include Lys-103, His-140, and His-178. An N6-carboxylysine modification is found at Lys-103. Residue His-140 coordinates substrate. Substrate is bound at residue Leu-223. Asp-251 serves as a coordination point for Zn(2+). Residue Asp-251 is part of the active site. Substrate-binding residues include His-255 and Ala-267.

It belongs to the metallo-dependent hydrolases superfamily. DHOase family. Class II DHOase subfamily. Homodimer. The cofactor is Zn(2+).

The catalysed reaction is (S)-dihydroorotate + H2O = N-carbamoyl-L-aspartate + H(+). The protein operates within pyrimidine metabolism; UMP biosynthesis via de novo pathway; (S)-dihydroorotate from bicarbonate: step 3/3. Functionally, catalyzes the reversible cyclization of carbamoyl aspartate to dihydroorotate. The sequence is that of Dihydroorotase from Shigella boydii serotype 4 (strain Sb227).